The chain runs to 315 residues: Olfactory receptor 3A1 (315 aa).

Residues 1 to 28 (MQPESGANGTVIAEFILLGLLEAPGLQP) lie on the Extracellular side of the membrane. Asparagine 8 carries an N-linked (GlcNAc...) asparagine glycan. Residues 29 to 52 (VVFVLFLFAYLVTVGGNLSILAAV) traverse the membrane as a helical segment. At 53-60 (LVEPKLHS) the chain is on the cytoplasmic side. A helical membrane pass occupies residues 61-82 (PMYFFLGNLSVLDVGCISVTVP). Residues 83–103 (SMLSRLLSRKRAVPCGACLTQ) lie on the Extracellular side of the membrane. Cysteine 100 and cysteine 192 are oxidised to a cystine. The helical transmembrane segment at 104-123 (LFFFHLFVGVDCFLLTAMAY) threads the bilayer. Residues 124–143 (DRFLAICRPLTYSTRMSQTV) lie on the Cytoplasmic side of the membrane. Residues 144–161 (QRMLVAASWACAFTNALT) traverse the membrane as a helical segment. Over 162 to 199 (HTVAMSTLNFCGPNEVNHFYCDLPQLFQLSCSSTQLNE) the chain is Extracellular. The chain crosses the membrane as a helical span at residues 200-223 (LLLFAVGFIMAGTPMALIVISYIH). At 224–240 (VAAAVLRIRSVEGRKKA) the chain is on the cytoplasmic side. The helical transmembrane segment at 241 to 264 (FSTCGSHLTVVAMFYGSGIFNYMR) threads the bilayer. Topologically, residues 265-275 (LGSTKLSDKDK) are extracellular. Residues 276–295 (AVGIFNTVINPMVNPIIYRF) form a helical membrane-spanning segment. Over 296–315 (RNPEVQSAIWRMLTGRRSLA) the chain is Cytoplasmic.

This sequence belongs to the G-protein coupled receptor 1 family.

Its subcellular location is the cell membrane. Functionally, odorant receptor. The protein is Olfactory receptor 3A1 (OR3A1) of Pan troglodytes (Chimpanzee).